The following is a 595-amino-acid chain: Beta-(1--&gt;2)glucan export ATP-binding/permease protein NdvA (595 aa).

5 helical membrane passes run 21-41 (FLLICTANITLAIITIAEPIL), 56-76 (LVTLAVWMCFGISNIIAYVLV), 129-149 (IWLEFMRQHLSTFVALFVLVP), 158-178 (LSIVLMVLAILYILIARLVMQ), and 252-272 (ISIVCVLLLGAFFVIKGQLSV). The 281-residue stretch at 21 to 301 (FLLICTANIT…ISGFINLAVS (281 aa)) folds into the ABC transmembrane type-1 domain. The ABC transporter domain maps to 335–569 (IQFHHVTYEF…DGHFYKLLKR (235 aa)). Residue 368–375 (GPTGAGKT) coordinates ATP.

Belongs to the ABC transporter superfamily. Beta-(1--&gt;2)glucan exporter (TC 3.A.1.108.1) family. As to quaternary structure, homodimer.

The protein localises to the cell inner membrane. The catalysed reaction is [(1-&gt;2)-beta-D-glucosyl](n)(in) + ATP + H2O = [(1-&gt;2)-beta-D-glucosyl](n)(out) + ADP + phosphate + H(+). Functionally, involved in beta-(1--&gt;2)glucan export. Transmembrane domains (TMD) form a pore in the inner membrane and the ATP-binding domain (NBD) is responsible for energy generation. This Bartonella bacilliformis protein is Beta-(1--&gt;2)glucan export ATP-binding/permease protein NdvA.